The chain runs to 211 residues: Uridine kinase (211 aa).

Position 12–19 (12–19) interacts with ATP; sequence GGSGSGKT.

The protein belongs to the uridine kinase family.

It localises to the cytoplasm. It catalyses the reaction uridine + ATP = UMP + ADP + H(+). It carries out the reaction cytidine + ATP = CMP + ADP + H(+). The protein operates within pyrimidine metabolism; CTP biosynthesis via salvage pathway; CTP from cytidine: step 1/3. It functions in the pathway pyrimidine metabolism; UMP biosynthesis via salvage pathway; UMP from uridine: step 1/1. This is Uridine kinase from Bacillus velezensis (strain DSM 23117 / BGSC 10A6 / LMG 26770 / FZB42) (Bacillus amyloliquefaciens subsp. plantarum).